The chain runs to 191 residues: Pyridoxal 5'-phosphate synthase subunit PdxT (191 aa).

L-glutamine is bound at residue 46 to 48 (GES). C78 functions as the Nucleophile in the catalytic mechanism. Residues R105 and 133–134 (IR) contribute to the L-glutamine site. Active-site charge relay system residues include H169 and E171.

It belongs to the glutaminase PdxT/SNO family. In terms of assembly, in the presence of PdxS, forms a dodecamer of heterodimers. Only shows activity in the heterodimer.

It catalyses the reaction aldehydo-D-ribose 5-phosphate + D-glyceraldehyde 3-phosphate + L-glutamine = pyridoxal 5'-phosphate + L-glutamate + phosphate + 3 H2O + H(+). It carries out the reaction L-glutamine + H2O = L-glutamate + NH4(+). It functions in the pathway cofactor biosynthesis; pyridoxal 5'-phosphate biosynthesis. In terms of biological role, catalyzes the hydrolysis of glutamine to glutamate and ammonia as part of the biosynthesis of pyridoxal 5'-phosphate. The resulting ammonia molecule is channeled to the active site of PdxS. This chain is Pyridoxal 5'-phosphate synthase subunit PdxT, found in Fervidobacterium nodosum (strain ATCC 35602 / DSM 5306 / Rt17-B1).